The chain runs to 115 residues: UPF0738 protein SACOL1009 (115 aa).

This sequence belongs to the UPF0738 family.

This Staphylococcus aureus (strain COL) protein is UPF0738 protein SACOL1009.